A 288-amino-acid chain; its full sequence is Phenazine biosynthesis-like domain-containing protein 2 (288 aa).

The active site involves E46.

This sequence belongs to the PhzF family.

The sequence is that of Phenazine biosynthesis-like domain-containing protein 2 (Pbld2) from Mus musculus (Mouse).